A 158-amino-acid polypeptide reads, in one-letter code: SsrA-binding protein (158 aa).

This sequence belongs to the SmpB family.

Its subcellular location is the cytoplasm. In terms of biological role, required for rescue of stalled ribosomes mediated by trans-translation. Binds to transfer-messenger RNA (tmRNA), required for stable association of tmRNA with ribosomes. tmRNA and SmpB together mimic tRNA shape, replacing the anticodon stem-loop with SmpB. tmRNA is encoded by the ssrA gene; the 2 termini fold to resemble tRNA(Ala) and it encodes a 'tag peptide', a short internal open reading frame. During trans-translation Ala-aminoacylated tmRNA acts like a tRNA, entering the A-site of stalled ribosomes, displacing the stalled mRNA. The ribosome then switches to translate the ORF on the tmRNA; the nascent peptide is terminated with the 'tag peptide' encoded by the tmRNA and targeted for degradation. The ribosome is freed to recommence translation, which seems to be the essential function of trans-translation. This chain is SsrA-binding protein, found in Caldanaerobacter subterraneus subsp. tengcongensis (strain DSM 15242 / JCM 11007 / NBRC 100824 / MB4) (Thermoanaerobacter tengcongensis).